Reading from the N-terminus, the 856-residue chain is DNA mismatch repair protein MutS (856 aa).

618–625 contributes to the ATP binding site; it reads GPNMGGKS.

Belongs to the DNA mismatch repair MutS family.

Its function is as follows. This protein is involved in the repair of mismatches in DNA. It is possible that it carries out the mismatch recognition step. This protein has a weak ATPase activity. This is DNA mismatch repair protein MutS from Shewanella baltica (strain OS155 / ATCC BAA-1091).